The sequence spans 87 residues: Acyl-CoA-binding protein (87 aa).

The 86-residue stretch at valine 2–serine 87 folds into the ACB domain. An acyl-CoA-binding positions include tyrosine 29–lysine 33, lysine 51, and lysine 55. Lysine 51 participates in a covalent cross-link: Glycyl lysine isopeptide (Lys-Gly) (interchain with G-Cter in ubiquitin). Residue lysine 72 forms a Glycyl lysine isopeptide (Lys-Gly) (interchain with G-Cter in ubiquitin) linkage. An acyl-CoA is bound at residue tyrosine 74.

Belongs to the ACBP family.

Binds medium- and long-chain acyl-CoA esters with very high affinity and may function as an intracellular carrier of acyl-CoA esters. Enhances the in vitro activity of the ceramide synthase complex. This Saccharomyces cerevisiae (strain ATCC 204508 / S288c) (Baker's yeast) protein is Acyl-CoA-binding protein (ACB1).